A 333-amino-acid chain; its full sequence is Acetyl-coenzyme A carboxylase carboxyl transferase subunit alpha (333 aa).

In terms of domain architecture, CoA carboxyltransferase C-terminal spans 48-308 (LLEQKVDALR…KEMLVEELRD (261 aa)).

The protein belongs to the AccA family. In terms of assembly, acetyl-CoA carboxylase is a heterohexamer composed of biotin carboxyl carrier protein (AccB), biotin carboxylase (AccC) and two subunits each of ACCase subunit alpha (AccA) and ACCase subunit beta (AccD).

The protein resides in the cytoplasm. The catalysed reaction is N(6)-carboxybiotinyl-L-lysyl-[protein] + acetyl-CoA = N(6)-biotinyl-L-lysyl-[protein] + malonyl-CoA. Its pathway is lipid metabolism; malonyl-CoA biosynthesis; malonyl-CoA from acetyl-CoA: step 1/1. Functionally, component of the acetyl coenzyme A carboxylase (ACC) complex. First, biotin carboxylase catalyzes the carboxylation of biotin on its carrier protein (BCCP) and then the CO(2) group is transferred by the carboxyltransferase to acetyl-CoA to form malonyl-CoA. This is Acetyl-coenzyme A carboxylase carboxyl transferase subunit alpha from Chlorobium limicola (strain DSM 245 / NBRC 103803 / 6330).